We begin with the raw amino-acid sequence, 25 residues long: Antimicrobial peptide scolopin-2 (25 aa).

Expressed by the venom gland.

Its subcellular location is the secreted. In terms of biological role, antimicrobial peptide against both Gram-positive, -negative and yeast. Also induces histamine release by mast cells and shows moderate hemolytic activities against both human and rabbit red cells. The polypeptide is Antimicrobial peptide scolopin-2 (Scolopendra mutilans (Chinese red-headed centipede)).